A 172-amino-acid chain; its full sequence is Small ribosomal subunit protein uS5 (172 aa).

In terms of domain architecture, S5 DRBM spans 17–80 (LREKMISVNR…DEARRKMVKV (64 aa)).

The protein belongs to the universal ribosomal protein uS5 family. Part of the 30S ribosomal subunit. Contacts proteins S4 and S8.

In terms of biological role, with S4 and S12 plays an important role in translational accuracy. Functionally, located at the back of the 30S subunit body where it stabilizes the conformation of the head with respect to the body. In Cupriavidus taiwanensis (strain DSM 17343 / BCRC 17206 / CCUG 44338 / CIP 107171 / LMG 19424 / R1) (Ralstonia taiwanensis (strain LMG 19424)), this protein is Small ribosomal subunit protein uS5.